Consider the following 735-residue polypeptide: MYPRHDDVSLFQRFVNDHKLEEKGLPLYQLAQLEGTDQVMLGVDGTKIIDMITQAVREREKMAIYTYTTPYTVYEKINEFRTMFQSIKNCTPVFVFNGIQYSPDSAEEFGREKNVVPSEVAALTGTDSSRLSNTTNVRFAEIHKKTANRFVVEEDVEGQIIRIFRSEFKNTIRAPYLAWAQLSSFRHCNHRHISEVYGCLELLAFPGIDRVVTNINPTRGTFDVVYKARVLEAARLSEEDLSSLILVESRSRVMRTVTLKFSSLEDMIKKVVRYKGSTIGASFAQQLHEEAIRASEANRMRASNQRGAAFRNLSAFASPVLTLTPPHCLPLHFLYGIPGFPHADAESFVGLPLPPVLYYIMSAGLLSPSLFAAVSQETVVDDWPLVDSIKYRDVAETVLPLRVQTIYQLAWTMSRGLGSISWFRRYNVLPARVSKLHVPPAIQLDGWALHSVTVPRGLHLVDVMEFAHLACSVDQVIYNTMEETYAAILLQSLDLLGYLTHETQDLHEEGQSSEPSTFGRALQLCSVPTLSEYTVLLIELARTNAISTEPFRITTEEVSPRDTPRDIVFASRVLSIIPLNVSGPWTAPIDAELAAFSMLSRMISRSIRQLLEAITTLMFSKGRTHVPLHRIGEIQRLLPFSTPVEFGCGVLVEYMLMKDKCTLKDLEEAFPECTYLRHDLATLFYFWDLAVQVLQRIETKENFCVDQHCLSSANERMKRAQKNLNILTGVRETYY.

Residues 475–722 (QVIYNTMEET…ANERMKRAQK (248 aa)) form an interaction with PBP1 region.

It belongs to the XPG/RAD2 endonuclease family. As to quaternary structure, forms a complex composed of at least MKT1, PBP1, XAC1 and LSM12. Within the complex, interacts (via C-terminus) with PBP1; the interaction is direct. Interacts with RNA-binding protein ZC3H11 (via MKT1-binding motif); the interaction is direct. May interact with RNA-binding proteins CFB1 and CFB2. Interacts with the EIF4E6-EIF4G5 translation initiation complex via EIF4G5; the interaction with EIF4G5 is direct.

It localises to the cytoplasm. The protein localises to the cytosol. Its subcellular location is the stress granule. Its function is as follows. Involved in post-transcriptional regulation of gene expression. Promotes mRNA stabilization by recruiting a complex containing PBP1, LSM12 and XAC1 to mRNAs. Recruited to mRNAs by sequence-specific RNA binding proteins. May regulate translation through interactions with the EIF4E6-EIF4G5 translation initiation complex. This is Post-transcriptional regulator MKT1 from Trypanosoma brucei brucei (strain 927/4 GUTat10.1).